Here is an 88-residue protein sequence, read N- to C-terminus: Small ribosomal subunit protein eS25B (88 aa).

It belongs to the eukaryotic ribosomal protein eS25 family. In terms of assembly, component of the small ribosomal subunit (SSU). Mature yeast ribosomes consist of a small (40S) and a large (60S) subunit. The 40S small subunit contains 1 molecule of ribosomal RNA (18S rRNA) and at least 33 different proteins. The large 60S subunit contains 3 rRNA molecules (25S, 5.8S and 5S rRNA) and at least 46 different proteins.

Its subcellular location is the cytoplasm. In terms of biological role, component of the ribosome, a large ribonucleoprotein complex responsible for the synthesis of proteins in the cell. The small ribosomal subunit (SSU) binds messenger RNAs (mRNAs) and translates the encoded message by selecting cognate aminoacyl-transfer RNA (tRNA) molecules. The large subunit (LSU) contains the ribosomal catalytic site termed the peptidyl transferase center (PTC), which catalyzes the formation of peptide bonds, thereby polymerizing the amino acids delivered by tRNAs into a polypeptide chain. The nascent polypeptides leave the ribosome through a tunnel in the LSU and interact with protein factors that function in enzymatic processing, targeting, and the membrane insertion of nascent chains at the exit of the ribosomal tunnel. The polypeptide is Small ribosomal subunit protein eS25B (rps2501) (Schizosaccharomyces pombe (strain 972 / ATCC 24843) (Fission yeast)).